Reading from the N-terminus, the 249-residue chain is Ditrans,polycis-undecaprenyl-diphosphate synthase ((2E,6E)-farnesyl-diphosphate specific) (249 aa).

Residue Asp29 is part of the active site. Position 29 (Asp29) interacts with Mg(2+). Substrate contacts are provided by residues 30-33 (GNGR), Trp34, Arg42, His46, and 74-76 (STE). Catalysis depends on Asn77, which acts as the Proton acceptor. Substrate is bound by residues Trp78, Arg80, Arg197, and 203 to 205 (RLS). Mg(2+) is bound at residue Glu216.

The protein belongs to the UPP synthase family. In terms of assembly, homodimer. The cofactor is Mg(2+).

The catalysed reaction is 8 isopentenyl diphosphate + (2E,6E)-farnesyl diphosphate = di-trans,octa-cis-undecaprenyl diphosphate + 8 diphosphate. Its function is as follows. Generates ditrans,octacis-undecaprenyl pyrophosphate (UPP) from isopentenyl pyrophosphate (IPP) and farnesyl diphosphate. UPP is the precursor of glycosyl carrier lipid in the biosynthesis of bacterial cell wall polysaccharide components such as peptidoglycan and lipopolysaccharide. In Micrococcus luteus (Micrococcus lysodeikticus), this protein is Ditrans,polycis-undecaprenyl-diphosphate synthase ((2E,6E)-farnesyl-diphosphate specific) (uppS).